Consider the following 298-residue polypeptide: Super small secreted glycoprotein (298 aa).

The first 32 residues, M1–S32, serve as a signal peptide directing secretion. A glycan (N-linked (GlcNAc...) asparagine; by host) is linked at N40. 2 cysteine pairs are disulfide-bonded: C108–C135 and C121–C147. 5 N-linked (GlcNAc...) asparagine; by host glycosylation sites follow: N204, N228, N238, N257, and N268.

It belongs to the filoviruses glycoprotein family.

The protein resides in the secreted. The sequence is that of Super small secreted glycoprotein (GP) from Epomops franqueti (Franquet's epauletted fruit bat).